Consider the following 436-residue polypeptide: Acetyl-CoA decarbonylase/synthase complex subunit delta (436 aa).

The protein belongs to the CdhD family. As to quaternary structure, heterodimer of delta and gamma chains. The ACDS complex is made up of alpha, epsilon, beta, gamma and delta chains with a probable stoichiometry of (alpha(2)epsilon(2))(4)-beta(8)-(gamma(1)delta(1))(8).

It functions in the pathway one-carbon metabolism; methanogenesis from acetate. In terms of biological role, part of a complex that catalyzes the reversible cleavage of acetyl-CoA, allowing growth on acetate as sole source of carbon and energy. Probably maintains the overall quaternary structure of the ACDS complex. The chain is Acetyl-CoA decarbonylase/synthase complex subunit delta from Methanosarcina mazei (strain ATCC BAA-159 / DSM 3647 / Goe1 / Go1 / JCM 11833 / OCM 88) (Methanosarcina frisia).